A 447-amino-acid chain; its full sequence is Multidrug efflux pump SdrM (447 aa).

A run of 14 helical transmembrane segments spans residues 6–26, 42–62, 70–90, 94–114, 134–154, 161–181, 194–214, 217–237, 260–280, 286–306, 323–342, 346–363, 392–412, and 418–438; these read IITV…SSII, LISL…PIVG, IIYV…MCGL, FTML…LMSL, IVGS…GGIL, WLFY…IWTF, FDTK…FALL, QLLL…MCLF, VFIT…YIPV, LGLS…AWIT, IYLL…SFGI, VLIA…GYIY, LGAS…SGIF, and NVLS…VVFF.

Belongs to the major facilitator superfamily.

The protein resides in the cell membrane. Its function is as follows. Energy-dependent drug efflux pump that increases resistance to antimicrobial agents such as norfloxacin, acriflavine and ethidium bromide. The sequence is that of Multidrug efflux pump SdrM from Staphylococcus aureus (strain N315).